A 233-amino-acid polypeptide reads, in one-letter code: Favin (233 aa).

Mn(2+) is bound by residues glutamate 120 and aspartate 122. Aspartate 122, phenylalanine 124, asparagine 126, and aspartate 130 together coordinate Ca(2+). Aspartate 130 and histidine 137 together coordinate Mn(2+). The N-linked (GlcNAc...) asparagine glycan is linked to asparagine 168.

This sequence belongs to the leguminous lectin family. In terms of assembly, heterodimer of an alpha and a beta chain.

The sequence is that of Favin from Vicia faba (Broad bean).